We begin with the raw amino-acid sequence, 159 residues long: Cytochrome b6-f complex subunit 4 (159 aa).

Helical transmembrane passes span 36 to 56 (LLYI…GLAV), 95 to 115 (LLGV…PFLE), and 131 to 151 (TVFL…TLPI).

This sequence belongs to the cytochrome b family. PetD subfamily. As to quaternary structure, the 4 large subunits of the cytochrome b6-f complex are cytochrome b6, subunit IV (17 kDa polypeptide, petD), cytochrome f and the Rieske protein, while the 4 small subunits are petG, petL, petM and petN. The complex functions as a dimer.

Its subcellular location is the plastid. The protein localises to the chloroplast thylakoid membrane. In terms of biological role, component of the cytochrome b6-f complex, which mediates electron transfer between photosystem II (PSII) and photosystem I (PSI), cyclic electron flow around PSI, and state transitions. This is Cytochrome b6-f complex subunit 4 from Piper cenocladum (Ant piper).